The sequence spans 74 residues: Protein krueppel (74 aa).

4 C2H2-type zinc fingers span residues 1–4, 10–32, 38–60, and 66–74; these read ERTH, FECP…MRLH, YHCS…LRVH, and YACELCAAK.

This sequence belongs to the krueppel C2H2-type zinc-finger protein family.

The protein resides in the nucleus. In terms of biological role, krueppel is a gap class segmentation protein. This Apis mellifera (Honeybee) protein is Protein krueppel (Kr).